Here is a 462-residue protein sequence, read N- to C-terminus: UDP-N-acetylmuramate--L-alanine ligase (462 aa).

116-122 (GAHGKTT) lines the ATP pocket.

The protein belongs to the MurCDEF family.

The protein resides in the cytoplasm. The catalysed reaction is UDP-N-acetyl-alpha-D-muramate + L-alanine + ATP = UDP-N-acetyl-alpha-D-muramoyl-L-alanine + ADP + phosphate + H(+). It functions in the pathway cell wall biogenesis; peptidoglycan biosynthesis. Functionally, cell wall formation. The protein is UDP-N-acetylmuramate--L-alanine ligase of Desulforamulus reducens (strain ATCC BAA-1160 / DSM 100696 / MI-1) (Desulfotomaculum reducens).